The chain runs to 729 residues: Neurochondrin (729 aa).

S2 carries the post-translational modification N-acetylserine. S2 is modified (phosphoserine). S2 carries the N-acetylalanine modification. 2 S-palmitoyl cysteine lipidation sites follow: C3 and C4. At R75 the chain carries Asymmetric dimethylarginine. S448 carries the post-translational modification Phosphoserine.

Belongs to the neurochondrin family. In terms of assembly, interacts with MCHR1. Interacts with SEMA4C. Interacts with DIAPH1 (via FH3 domain). Interacts with GRM5. Post-translationally, palmitoylated. Palmitoylation by ZDHHC1, ZDHHC3 and ZDHHC11 regulates the association of NCDN with endosome membranes. May also be palmitoylated by ZDHHC7. As to expression, abundantly expressed in whole adult brain and in all individual brain regions examined, including spinal cord. Weakly expressed in ovary, testis, fetal brain and small intestine.

It is found in the cytoplasm. It localises to the cytosol. Its subcellular location is the endosome membrane. The protein localises to the cell projection. The protein resides in the dendrite. It is found in the postsynapse. Probably involved in signal transduction in the nervous system, via increasing cell surface localization of GRM5/mGluR5 and positively regulating its signaling. Required for the spatial learning process. Acts as a negative regulator of Ca(2+)-calmodulin-dependent protein kinase 2 (CaMK2) phosphorylation. May play a role in modulating melanin-concentrating hormone-mediated functions via its interaction with MCHR1 that interferes with G protein-coupled signal transduction. May be involved in bone metabolism. May also be involved in neurite outgrowth. This chain is Neurochondrin, found in Homo sapiens (Human).